The chain runs to 504 residues: Apolipoprotein N-acyltransferase (504 aa).

Helical transmembrane passes span 6–26, 47–67, 83–103, 105–125, 153–173, and 186–206; these read LALT…YALV, ALYG…WVFV, LTAL…WLGV, AGGG…WVVT, IAPV…AGLL, and FALL…KVQW. The CN hydrolase domain maps to 219 to 457; that stretch reads LQGNVPQDQK…REALTGMMQP (239 aa). Glutamate 258 (proton acceptor) is an active-site residue. Residue lysine 317 is part of the active site. Residue cysteine 369 is the Nucleophile of the active site. A helical transmembrane segment spans residues 465–485; the sequence is ALWGDWPAIGLCAGIVGICFA.

Belongs to the CN hydrolase family. Apolipoprotein N-acyltransferase subfamily.

Its subcellular location is the cell inner membrane. The enzyme catalyses N-terminal S-1,2-diacyl-sn-glyceryl-L-cysteinyl-[lipoprotein] + a glycerophospholipid = N-acyl-S-1,2-diacyl-sn-glyceryl-L-cysteinyl-[lipoprotein] + a 2-acyl-sn-glycero-3-phospholipid + H(+). It participates in protein modification; lipoprotein biosynthesis (N-acyl transfer). In terms of biological role, catalyzes the phospholipid dependent N-acylation of the N-terminal cysteine of apolipoprotein, the last step in lipoprotein maturation. The chain is Apolipoprotein N-acyltransferase from Methylococcus capsulatus (strain ATCC 33009 / NCIMB 11132 / Bath).